We begin with the raw amino-acid sequence, 349 residues long: Ferredoxin--NADP reductase 1 (349 aa).

Residues glutamate 36, lysine 44, tyrosine 48, valine 88, leucine 123, aspartate 290, and serine 331 each contribute to the FAD site.

It belongs to the ferredoxin--NADP reductase type 2 family. In terms of assembly, homodimer. It depends on FAD as a cofactor.

The catalysed reaction is 2 reduced [2Fe-2S]-[ferredoxin] + NADP(+) + H(+) = 2 oxidized [2Fe-2S]-[ferredoxin] + NADPH. In Bacillus cereus (strain ATCC 10987 / NRS 248), this protein is Ferredoxin--NADP reductase 1.